The sequence spans 194 residues: MPKGRRGSQNPKMSQRPAPPLYFPSLYDRGISSSPLSDFNIWKKLFVPLKAGGTPAAGVAGVAGVRSLPLAPPATVPPPPPGLGPPSERPCPPPWPSGLASIPYEPLRFFYSPPPGPEMATSALVPGSTTPWLASASHPEELCELEIRIKELELLTITGDGFDSQRYKFLKALKDEKLQGLKMSRQPGKSASCS.

Disordered regions lie at residues 1-21 (MPKG…APPL) and 73-97 (PATV…PWPS). The segment covering 73–96 (PATVPPPPPGLGPPSERPCPPPWP) has biased composition (pro residues).

This is an uncharacterized protein from Mus musculus (Mouse).